The following is a 417-amino-acid chain: Serine hydroxymethyltransferase 2 (417 aa).

(6S)-5,6,7,8-tetrahydrofolate-binding positions include leucine 121 and 125–127; that span reads GHL. Lysine 230 carries the post-translational modification N6-(pyridoxal phosphate)lysine. Residue 355–357 participates in (6S)-5,6,7,8-tetrahydrofolate binding; it reads SPF.

This sequence belongs to the SHMT family. As to quaternary structure, homodimer. Pyridoxal 5'-phosphate is required as a cofactor.

It localises to the cytoplasm. It catalyses the reaction (6R)-5,10-methylene-5,6,7,8-tetrahydrofolate + glycine + H2O = (6S)-5,6,7,8-tetrahydrofolate + L-serine. It functions in the pathway one-carbon metabolism; tetrahydrofolate interconversion. It participates in amino-acid biosynthesis; glycine biosynthesis; glycine from L-serine: step 1/1. Its function is as follows. Catalyzes the reversible interconversion of serine and glycine with tetrahydrofolate (THF) serving as the one-carbon carrier. This reaction serves as the major source of one-carbon groups required for the biosynthesis of purines, thymidylate, methionine, and other important biomolecules. Also exhibits THF-independent aldolase activity toward beta-hydroxyamino acids, producing glycine and aldehydes, via a retro-aldol mechanism. This Pseudomonas savastanoi pv. phaseolicola (strain 1448A / Race 6) (Pseudomonas syringae pv. phaseolicola (strain 1448A / Race 6)) protein is Serine hydroxymethyltransferase 2.